Consider the following 124-residue polypeptide: MGLPKTLRLKHWQDFQTVYQQGKRHRHSNLLMRVLGDRQADHSRFGITVSQKVSKKATVRNRLKRQIRAVINHFQPQIKPGFDVVIIVLPQGIGCNYERFLRELEQLFSQAGIIDHGHSRNHLL.

It belongs to the RnpA family. In terms of assembly, consists of a catalytic RNA component (M1 or rnpB) and a protein subunit.

The enzyme catalyses Endonucleolytic cleavage of RNA, removing 5'-extranucleotides from tRNA precursor.. RNaseP catalyzes the removal of the 5'-leader sequence from pre-tRNA to produce the mature 5'-terminus. It can also cleave other RNA substrates such as 4.5S RNA. The protein component plays an auxiliary but essential role in vivo by binding to the 5'-leader sequence and broadening the substrate specificity of the ribozyme. The chain is Ribonuclease P protein component from Synechocystis sp. (strain ATCC 27184 / PCC 6803 / Kazusa).